A 522-amino-acid chain; its full sequence is Maturase K (522 aa).

It belongs to the intron maturase 2 family. MatK subfamily.

It is found in the plastid. The protein resides in the chloroplast. Functionally, usually encoded in the trnK tRNA gene intron. Probably assists in splicing its own and other chloroplast group II introns. The chain is Maturase K from Watsonia angusta.